Reading from the N-terminus, the 642-residue chain is Rhotekin-2 (642 aa).

The region spanning 30–105 is the REM-1 domain; it reads IKRKKIRESM…AQKRTGHQDF (76 aa). The 108-residue stretch at 306–413 folds into the PH domain; sequence LDMMSGFLSQ…WLDSLWQHIY (108 aa). 2 disordered regions span residues 505 to 563 and 575 to 642; these read TVLS…GRPS and LQKS…PKAW. 2 stretches are compositionally biased toward basic and acidic residues: residues 597 to 615 and 632 to 642; these read PEKR…KEYI and SFREKMNPKAW.

The chain is Rhotekin-2 (rtkn2) from Danio rerio (Zebrafish).